Consider the following 203-residue polypeptide: Cardiotrophin-1 (203 aa).

Belongs to the IL-6 superfamily. In terms of tissue distribution, expressed in the ventricle and atrium of adult rats. Also detected in the lung, kidney, liver, skeletal muscle, stomach and urinary bladder. Not detected in brain, colon, testis, spleen or thymus. Overexpressed in the ventricles in the case of hypertension and hypertrophy.

The protein resides in the secreted. Its function is as follows. Induces cardiac myocyte hypertrophy in vitro. Binds to and activates the ILST/gp130 receptor. The protein is Cardiotrophin-1 (Ctf1) of Rattus norvegicus (Rat).